The chain runs to 257 residues: Imidazole glycerol phosphate synthase subunit HisF (257 aa).

Active-site residues include aspartate 11 and aspartate 130.

This sequence belongs to the HisA/HisF family. Heterodimer of HisH and HisF.

It localises to the cytoplasm. It carries out the reaction 5-[(5-phospho-1-deoxy-D-ribulos-1-ylimino)methylamino]-1-(5-phospho-beta-D-ribosyl)imidazole-4-carboxamide + L-glutamine = D-erythro-1-(imidazol-4-yl)glycerol 3-phosphate + 5-amino-1-(5-phospho-beta-D-ribosyl)imidazole-4-carboxamide + L-glutamate + H(+). It functions in the pathway amino-acid biosynthesis; L-histidine biosynthesis; L-histidine from 5-phospho-alpha-D-ribose 1-diphosphate: step 5/9. Its function is as follows. IGPS catalyzes the conversion of PRFAR and glutamine to IGP, AICAR and glutamate. The HisF subunit catalyzes the cyclization activity that produces IGP and AICAR from PRFAR using the ammonia provided by the HisH subunit. The polypeptide is Imidazole glycerol phosphate synthase subunit HisF (Shewanella putrefaciens (strain CN-32 / ATCC BAA-453)).